The following is a 406-amino-acid chain: Multifunctional CCA protein (406 aa).

Residues glycine 8 and arginine 11 each contribute to the ATP site. Residues glycine 8 and arginine 11 each coordinate CTP. The Mg(2+) site is built by glutamate 21 and aspartate 23. 3 residues coordinate ATP: arginine 91, arginine 137, and arginine 140. 3 residues coordinate CTP: arginine 91, arginine 137, and arginine 140. Positions 225 to 326 (TGIHTLKVLE…LKLLNRVDAF (102 aa)) constitute an HD domain.

The protein belongs to the tRNA nucleotidyltransferase/poly(A) polymerase family. Bacterial CCA-adding enzyme type 1 subfamily. Monomer. Can also form homodimers and oligomers. Requires Mg(2+) as cofactor. Ni(2+) is required as a cofactor.

The enzyme catalyses a tRNA precursor + 2 CTP + ATP = a tRNA with a 3' CCA end + 3 diphosphate. The catalysed reaction is a tRNA with a 3' CCA end + 2 CTP + ATP = a tRNA with a 3' CCACCA end + 3 diphosphate. Functionally, catalyzes the addition and repair of the essential 3'-terminal CCA sequence in tRNAs without using a nucleic acid template. Adds these three nucleotides in the order of C, C, and A to the tRNA nucleotide-73, using CTP and ATP as substrates and producing inorganic pyrophosphate. tRNA 3'-terminal CCA addition is required both for tRNA processing and repair. Also involved in tRNA surveillance by mediating tandem CCA addition to generate a CCACCA at the 3' terminus of unstable tRNAs. While stable tRNAs receive only 3'-terminal CCA, unstable tRNAs are marked with CCACCA and rapidly degraded. This chain is Multifunctional CCA protein, found in Nitrosococcus oceani (strain ATCC 19707 / BCRC 17464 / JCM 30415 / NCIMB 11848 / C-107).